Here is a 167-residue protein sequence, read N- to C-terminus: MRTLMIEPLTKEAFAQFGDVIETDGSDHFMINNGSTMRFHKLATVETAEPEDKAIISIFRADAQDMPLTVRMLERHPLGSQAFIPLLGNPFLIVVAPVGDAPVSGLVRAFRSNGRQGVNYHRGVWHHPVLTIEKRDDFLVVDRSGSGNNCDEHYFTEEQMLILNPHQ.

Belongs to the ureidoglycolate lyase family. Homodimer. The cofactor is Ni(2+).

It carries out the reaction (S)-ureidoglycolate = urea + glyoxylate. Its pathway is nitrogen metabolism; (S)-allantoin degradation. Functionally, catalyzes the catabolism of the allantoin degradation intermediate (S)-ureidoglycolate, generating urea and glyoxylate. Involved in the utilization of allantoin as nitrogen source. This is Ureidoglycolate lyase from Pseudomonas putida (strain ATCC 700007 / DSM 6899 / JCM 31910 / BCRC 17059 / LMG 24140 / F1).